Here is a 208-residue protein sequence, read N- to C-terminus: Nascent polypeptide-associated complex subunit alpha (208 aa).

Residues 1–19 (MSSSRIEELPDDDVPKTTV) are compositionally biased toward basic and acidic residues. Disordered stretches follow at residues 1–50 (MSSS…HSRN) and 120–166 (QLAA…VFDA). Over residues 21–34 (DAADSSESEVEGAE) the composition is skewed to acidic residues. The region spanning 48 to 113 (SRNEKKARKA…AKIEDLNSQA (66 aa)) is the NAC-A/B domain. The span at 120–131 (QLAAAEAAGSNE) shows a compositional bias: low complexity. The span at 132–154 (HAGHDHASHDHGKGKAVESADKK) shows a compositional bias: basic and acidic residues. Positions 155-164 (DEEEDDEEVF) are enriched in acidic residues. In terms of domain architecture, UBA spans 169–208 (LEAKDIELVMAQASVSRNKAIKALKENDNDIVNSIMALSV).

It belongs to the NAC-alpha family. As to quaternary structure, part of the nascent polypeptide-associated complex (NAC), consisting of EGD2 and EGD1. NAC associates with ribosomes via EGD1.

The protein localises to the cytoplasm. It localises to the nucleus. Component of the nascent polypeptide-associated complex (NAC), a dynamic component of the ribosomal exit tunnel, protecting the emerging polypeptides from interaction with other cytoplasmic proteins to ensure appropriate nascent protein targeting. The NAC complex also promotes mitochondrial protein import by enhancing productive ribosome interactions with the outer mitochondrial membrane and blocks the inappropriate interaction of ribosomes translating non-secretory nascent polypeptides with translocation sites in the membrane of the endoplasmic reticulum. EGD2 may also be involved in transcription regulation. The protein is Nascent polypeptide-associated complex subunit alpha (EGD2) of Ajellomyces capsulatus (strain NAm1 / WU24) (Darling's disease fungus).